Consider the following 426-residue polypeptide: MGSSSLSEDYRQCLERELRRGRAGVCGDPSLRAVLWQILVEDFDLHGALQDDALALFTDGLWGRADLAPALQDLARAFELLELAAVHLYLLPWRKEFTTIKTFSGGYVHVLKGVLSEELLTRSFQKMGYVRRDNHRLMVTTPPPACQLVQVALGCFALRLECEILSEVLTQLGTSVLPAEELLRARRASGDVASCVAWLQQRLAQDEEPPPLPPRGTPATYGAPVDLYQDLQEDESSEASLYGEPSPGLDSPPVELAYRPPLWEQSAKLWGSGGQPWEPPADDMHRASSPPYGALEEELEPEPSAFSFLSLRRELSRSGDLAPPESPSSPGQASPRHRQAEAAASSAYGPAVEPLSYQAHSCLSPGNLPTLCCDTCRQLHATHCTALSACRPTHSLRILLGDNQRRLWLQRAQVDNLLYDSPGAHP.

Disordered stretches follow at residues 204–223 (AQDEEPPPLPPRGTPATYGA), 234–256 (DESSEASLYGEPSPGLDSPPVEL), 269–300 (LWGSGGQPWEPPADDMHRASSPPYGALEEELE), and 316–347 (SRSGDLAPPESPSSPGQASPRHRQAEAAASSA). Phosphoserine is present on residues Ser-318 and Ser-326.

The protein belongs to the SPATA2 family.

This chain is Spermatogenesis-associated protein 2-like protein, found in Mus musculus (Mouse).